The sequence spans 528 residues: ATP synthase subunit alpha 1 (528 aa).

ATP is bound at residue 177–184; the sequence is GDRQTGKT.

Belongs to the ATPase alpha/beta chains family. As to quaternary structure, F-type ATPases have 2 components, CF(1) - the catalytic core - and CF(0) - the membrane proton channel. CF(1) has five subunits: alpha(3), beta(3), gamma(1), delta(1), epsilon(1). CF(0) has three main subunits: a(1), b(2) and c(9-12). The alpha and beta chains form an alternating ring which encloses part of the gamma chain. CF(1) is attached to CF(0) by a central stalk formed by the gamma and epsilon chains, while a peripheral stalk is formed by the delta and b chains.

It is found in the cell inner membrane. The enzyme catalyses ATP + H2O + 4 H(+)(in) = ADP + phosphate + 5 H(+)(out). Produces ATP from ADP in the presence of a proton gradient across the membrane. The alpha chain is a regulatory subunit. In Pseudoalteromonas atlantica (strain T6c / ATCC BAA-1087), this protein is ATP synthase subunit alpha 1.